Here is a 72-residue protein sequence, read N- to C-terminus: Protein Kish (72 aa).

The signal sequence occupies residues 1–26; sequence MSALFNFRSLLQVILLLICSCSYVHG. Topologically, residues 27–53 are lumenal; the sequence is QWPSLLDRYKNHEVLGAFWKMARVGER. A helical membrane pass occupies residues 54–72; sequence ASPYVSLACILMAISQFNS.

The protein belongs to the KISH family.

Its subcellular location is the endoplasmic reticulum membrane. The protein localises to the golgi apparatus membrane. Its function is as follows. Involved in the early part of the secretory pathway. The chain is Protein Kish from Saccharomyces cerevisiae (strain ATCC 204508 / S288c) (Baker's yeast).